A 1295-amino-acid polypeptide reads, in one-letter code: Serine protease sat autotransporter (1295 aa).

An N-terminal signal peptide occupies residues 1-49 (MNKIYSLKYSAATGGLIAVSELAKRVSGKTNRKLVATMLSLAVAGTVNA). The 250-residue stretch at 51 to 300 (NIDISNVWAR…TKYNDKLVSE (250 aa)) folds into the Peptidase S6 domain. Catalysis depends on charge relay system residues histidine 121, aspartate 149, and serine 256. One can recognise an Autotransporter domain in the interval 1029–1295 (DINGESGAWA…AINANFRYSF (267 aa)).

Post-translationally, cleaved to release the mature protein from the outer membrane.

It is found in the periplasm. It localises to the secreted. Its subcellular location is the cell surface. The protein localises to the cell outer membrane. Inhibited by phenylmethylsulfonyl fluoride and Pefabloc. In terms of biological role, shows serine protease activity and displays cytophatic activity, including elongation, rounding, and detachment of a proportion of the cells from monolayer in culture. Triggers vacuolation within the cytoplasm of the human bladder and kidney cells. The polypeptide is Serine protease sat autotransporter (sat) (Escherichia coli O6:H1 (strain CFT073 / ATCC 700928 / UPEC)).